We begin with the raw amino-acid sequence, 863 residues long: Protein ARG5,6, mitochondrial (863 aa).

The transit peptide at Met1 to Ser65 directs the protein to the mitochondrion. The region spanning Lys353–Ser505 is the N-acetyltransferase domain. Phosphoserine is present on Ser359. Residue Cys675 is part of the active site.

It in the N-terminal section; belongs to the acetylglutamate kinase family. In the C-terminal section; belongs to the NAGSA dehydrogenase family. In terms of processing, the protein precursor is cleaved into the two biologically active enzymes, the kinase and the reductase.

It localises to the mitochondrion. The enzyme catalyses N-acetyl-L-glutamate 5-semialdehyde + phosphate + NADP(+) = N-acetyl-L-glutamyl 5-phosphate + NADPH + H(+). The catalysed reaction is N-acetyl-L-glutamate + ATP = N-acetyl-L-glutamyl 5-phosphate + ADP. Its pathway is amino-acid biosynthesis; L-arginine biosynthesis; N(2)-acetyl-L-ornithine from L-glutamate: step 2/4. It functions in the pathway amino-acid biosynthesis; L-arginine biosynthesis; N(2)-acetyl-L-ornithine from L-glutamate: step 3/4. Its activity is regulated as follows. The kinase activity is inhibited by arginine. This Saccharomyces cerevisiae (strain ATCC 204508 / S288c) (Baker's yeast) protein is Protein ARG5,6, mitochondrial (ARG5,6).